The sequence spans 196 residues: GTP cyclohydrolase 1 (196 aa).

Zn(2+) is bound by residues C85, H88, and C156.

This sequence belongs to the GTP cyclohydrolase I family. In terms of assembly, toroid-shaped homodecamer, composed of two pentamers of five dimers.

The catalysed reaction is GTP + H2O = 7,8-dihydroneopterin 3'-triphosphate + formate + H(+). It participates in cofactor biosynthesis; 7,8-dihydroneopterin triphosphate biosynthesis; 7,8-dihydroneopterin triphosphate from GTP: step 1/1. The sequence is that of GTP cyclohydrolase 1 from Bacteroides thetaiotaomicron (strain ATCC 29148 / DSM 2079 / JCM 5827 / CCUG 10774 / NCTC 10582 / VPI-5482 / E50).